Consider the following 487-residue polypeptide: Cyclic AMP-dependent transcription factor ATF-2 (487 aa).

The segment at 7–31 (FLCTAPGCGQRFTNEDHLAVHKHKH) adopts a C2H2-type zinc-finger fold. The residue at position 34 (Thr-34) is a Phosphothreonine; by PKC/PRKCH. Ser-44 bears the Phosphoserine mark. Phosphothreonine; by MAPK11 and MAPK14 is present on Thr-51. Position 53 is a phosphothreonine; by MAPK1, MAPK3, MAPK11, MAPK12, MAPK14 and PLK3 (Thr-53). Thr-55 carries the phosphothreonine; by VRK1 modification. Phosphoserine is present on residues Ser-72 and Ser-94. The residue at position 98 (Thr-98) is a Phosphothreonine. A Phosphoserine; by PKC/PRKCA and PKC/PRKCB modification is found at Ser-103. Disordered regions lie at residues 106-137 (EEPS…PLAQ) and 241-355 (PGIP…RQKR). Ser-118 is modified (phosphoserine). The segment covering 264-275 (LTQQHPPVTNGD) has biased composition (polar residues). Positions 278–281 (KGHG) are essential for its histone acetyltransferase activity. The span at 300 to 316 (PATSTTETPASPAHTTP) shows a compositional bias: low complexity. Ser-310 carries the phosphoserine modification. Ser-322 carries the phosphoserine; by PKC/PRKCA and PKC/PRKCB modification. Over residues 328–345 (AANEDPDEKRRKFLERNR) the composition is skewed to basic and acidic residues. The 64-residue stretch at 334–397 (DEKRRKFLER…AQLKQLLLAH (64 aa)) folds into the bZIP domain. The segment at 336 to 356 (KRRKFLERNRAAASRCRQKRK) is basic motif. An N6-acetyllysine modification is found at Lys-339. Ser-349 is subject to Phosphoserine; by PKC/PRKCA and PKC/PRKCB. Lys-356 bears the N6-acetyllysine mark. Positions 362–390 (LEKKAEDLSSLNGQLQSEVTLLRNEVAQL) are leucine-zipper. The Nuclear export signal signature appears at 387–396 (VAQLKQLLLA). Positions 407 to 453 (KKSGYHTADKDDSSEDLSVPSSPHTEAIQHSSVSTSNGVSSTSKAEA) are disordered. Phosphoserine occurs at positions 424 and 428. Polar residues predominate over residues 425–436 (VPSSPHTEAIQH). Positions 437–449 (SSVSTSNGVSSTS) are enriched in low complexity. Phosphoserine; by ATM is present on residues Ser-472 and Ser-480.

This sequence belongs to the bZIP family. ATF subfamily. Binds DNA as a dimer and can form a homodimer in the absence of DNA. Can form a heterodimer with JUN. Heterodimerization is essential for its transcriptional activity. Interacts with SMAD3 and SMAD4. Interacts with the HK1/VDAC1 complex. Interacts with NBN, MRE11, XPO1, KAT5 and CUL3. Binds through its N-terminal region to UTF1 which acts as a coactivator of ATF2 transcriptional activity. In terms of processing, phosphorylation of Thr-51 by MAPK14 and MAPK11, and at Thr-53 by MAPK1/ERK2, MAPK3/ERK1, MAPK11, MAPK12 and MAPK14 in response to external stimulus like insulin causes increased transcriptional activity. Phosphorylated by PLK3 following hyperosmotic stress. Also phosphorylated and activated by JNK and CaMK4. ATM-mediated phosphorylation at Ser-472 and Ser-480 stimulates its function in DNA damage response. Phosphorylation at Ser-44, Thr-55 and Ser-103 activates its transcriptional activity. Phosphorylation at Thr-51 or Thr-53 enhances acetylation of histones H2B and H4.

It localises to the nucleus. It is found in the cytoplasm. The protein resides in the mitochondrion outer membrane. In terms of biological role, transcriptional activator which regulates the transcription of various genes, including those involved in anti-apoptosis, cell growth, and DNA damage response. Dependent on its binding partner, binds to CRE (cAMP response element) consensus sequences (5'-TGACGTCA-3') or to AP-1 (activator protein 1) consensus sequences (5'-TGACTCA-3'). In the nucleus, contributes to global transcription and the DNA damage response, in addition to specific transcriptional activities that are related to cell development, proliferation and death. In the cytoplasm, interacts with and perturbs HK1- and VDAC1-containing complexes at the mitochondrial outer membrane, thereby impairing mitochondrial membrane potential, inducing mitochondrial leakage and promoting cell death. The phosphorylated form (mediated by ATM) plays a role in the DNA damage response and is involved in the ionizing radiation (IR)-induced S phase checkpoint control and in the recruitment of the MRN complex into the IR-induced foci (IRIF). Exhibits histone acetyltransferase (HAT) activity which specifically acetylates histones H2B and H4 in vitro. In concert with CUL3 and RBX1, promotes the degradation of KAT5 thereby attenuating its ability to acetylate and activate ATM. Can elicit oncogenic or tumor suppressor activities depending on the tissue or cell type. In Mus musculus (Mouse), this protein is Cyclic AMP-dependent transcription factor ATF-2 (Atf2).